The sequence spans 75 residues: Putative membrane protein insertion efficiency factor (75 aa).

Belongs to the UPF0161 family.

It localises to the cell inner membrane. Could be involved in insertion of integral membrane proteins into the membrane. This Leptospira biflexa serovar Patoc (strain Patoc 1 / ATCC 23582 / Paris) protein is Putative membrane protein insertion efficiency factor.